Here is a 336-residue protein sequence, read N- to C-terminus: Methionine import ATP-binding protein MetN (336 aa).

Residues 2 to 254 (IKIKNLKKYY…PNAKMKEFLG (253 aa)) form the ABC transporter domain. 34–41 (GHSGAGKS) serves as a coordination point for ATP.

Belongs to the ABC transporter superfamily. Methionine importer (TC 3.A.1.24) family. In terms of assembly, the complex is composed of two ATP-binding proteins (MetN), two transmembrane proteins (MetI) and a solute-binding protein (MetQ).

The protein resides in the cell inner membrane. The catalysed reaction is L-methionine(out) + ATP + H2O = L-methionine(in) + ADP + phosphate + H(+). It catalyses the reaction D-methionine(out) + ATP + H2O = D-methionine(in) + ADP + phosphate + H(+). In terms of biological role, part of the ABC transporter complex MetNIQ involved in methionine import. Responsible for energy coupling to the transport system. The chain is Methionine import ATP-binding protein MetN from Campylobacter jejuni subsp. jejuni serotype O:2 (strain ATCC 700819 / NCTC 11168).